A 276-amino-acid polypeptide reads, in one-letter code: Small ribosomal subunit protein uS2 (276 aa).

The disordered stretch occupies residues 255 to 276 (ASATATAAPTEAGAPEPTTDPS).

It belongs to the universal ribosomal protein uS2 family.

The polypeptide is Small ribosomal subunit protein uS2 (Mycolicibacterium paratuberculosis (strain ATCC BAA-968 / K-10) (Mycobacterium paratuberculosis)).